We begin with the raw amino-acid sequence, 270 residues long: uncharacterized protein (270 aa).

The disordered stretch occupies residues 166-186 (RRKENNISNESVSEEPESPLF).

This is an uncharacterized protein from Ostreid herpesvirus 1 (isolate France) (OsHV-1).